Here is a 123-residue protein sequence, read N- to C-terminus: Cytochrome c-555 (123 aa).

The first 27 residues, 1–27 (MDHKKTSIRTTALAALVLGAVAAPAFS), serve as a signal peptide directing secretion. 4 residues coordinate heme c: cysteine 46, cysteine 49, histidine 50, and methionine 86.

In terms of processing, binds 1 heme c group covalently per subunit.

The protein is Cytochrome c-555 of Methylococcus capsulatus (strain ATCC 33009 / NCIMB 11132 / Bath).